The chain runs to 239 residues: tRNA (guanine-N(7)-)-methyltransferase (239 aa).

S-adenosyl-L-methionine-binding residues include Glu68, Glu93, Asp120, and Asp143. Asp143 is an active-site residue. Residues Lys147, Asp180, and 217–220 (TKFE) contribute to the substrate site.

This sequence belongs to the class I-like SAM-binding methyltransferase superfamily. TrmB family.

The enzyme catalyses guanosine(46) in tRNA + S-adenosyl-L-methionine = N(7)-methylguanosine(46) in tRNA + S-adenosyl-L-homocysteine. It participates in tRNA modification; N(7)-methylguanine-tRNA biosynthesis. Functionally, catalyzes the formation of N(7)-methylguanine at position 46 (m7G46) in tRNA. In Vibrio cholerae serotype O1 (strain ATCC 39541 / Classical Ogawa 395 / O395), this protein is tRNA (guanine-N(7)-)-methyltransferase.